Consider the following 798-residue polypeptide: Phenylalanine--tRNA ligase beta subunit (798 aa).

Positions 39-148 (NPIFDGFLVG…EDIPIGKKIN (110 aa)) constitute a tRNA-binding domain. The 76-residue stretch at 402-477 (SCSNKIKLYH…RIYNYNNIPL (76 aa)) folds into the B5 domain. Positions 455, 461, and 465 each coordinate Mg(2+). One can recognise an FDX-ACB domain in the interval 704–797 (SKYPTSRRDI…LKKKFQVVLR (94 aa)).

This sequence belongs to the phenylalanyl-tRNA synthetase beta subunit family. Type 1 subfamily. Tetramer of two alpha and two beta subunits. Mg(2+) is required as a cofactor.

It is found in the cytoplasm. It catalyses the reaction tRNA(Phe) + L-phenylalanine + ATP = L-phenylalanyl-tRNA(Phe) + AMP + diphosphate + H(+). This Buchnera aphidicola subsp. Schizaphis graminum (strain Sg) protein is Phenylalanine--tRNA ligase beta subunit (pheT).